A 649-amino-acid polypeptide reads, in one-letter code: Forkhead box protein O1 (649 aa).

2 disordered regions span residues 1–62 (MAEA…ASAS) and 112–151 (VHSA…SSRR). Position 24 is a phosphothreonine; by PKB/AKT1 or PKB/AKT2 and SGK1 (threonine 24). The segment covering 33 to 62 (NQSNSTTSSPAPSGSTAANPDATASLASAS) has biased composition (low complexity). A compositionally biased stretch (pro residues) spans 116 to 135 (PPQPPPTGPLSQPPPVPPAA). The segment at residues 154–248 (WGNLSYADLI…KSGKSPRRRA (95 aa)) is a DNA-binding region (fork-head). DNA-binding stretches follow at residues 205–212 (NSIRHNLS) and 228–231 (SSWW). Serine 206 carries the phosphoserine; by STK4/MST1 modification. Phosphoserine occurs at positions 212, 228, and 229. The interval 228–339 (SSWWMLNPEG…DDLGDGDVHS (112 aa)) is disordered. An N6-acetyllysine mark is found at lysine 239 and lysine 242. Residue serine 243 is modified to Phosphoserine; by CDK1. 2 positions are modified to omega-N-methylarginine; by PRMT1: arginine 245 and arginine 247. The Nuclear localization signal signature appears at 245 to 247 (RRR). Serine 250 is modified (phosphoserine; by PKB/AKT1 and SGK1). N6-acetyllysine is present on residues lysine 256, lysine 259, and lysine 268. The segment covering 258–269 (AKSRGRAAKKKA) has biased composition (basic residues). The segment at 277–557 (GPGDSPGSQF…RLTPVKTPLQ (281 aa)) is sufficient for interaction with NLK. 2 positions are modified to phosphoserine: serine 281 and serine 292. The span at 303–320 (NWSTFRPRTSSNASTISG) shows a compositional bias: polar residues. A Phosphoserine; by PKB/AKT1 modification is found at serine 313. Serine 316 bears the Phosphoserine; by CK1 and SGK1 mark. Serine 319 is modified (phosphoserine; by CK1). Serine 323 is subject to Phosphoserine. At threonine 327 the chain carries Phosphothreonine. The segment at 357–453 (SEISNPENME…GGLNQYNCAP (97 aa)) is required for interaction with RUNX2. Lysine 417 carries the N6-acetyllysine modification. Residues 456–460 (LKELL) carry the Required for interaction with SIRT1 motif.

Interacts with LRPPRC. Interacts with RUNX2; the interaction inhibits RUNX2 transcriptional activity and mediates the IGF1/insulin-dependent BGLAP expression in osteoblasts Interacts with PPP2R1A; the interaction regulates the dephosphorylation of FOXO1 at Thr-24 and Ser-250 leading to its nuclear import. Interacts with NLK. Interacts with SIRT1; the interaction results in the deacetylation of FOXO1 leading to activation of FOXO1-mediated transcription of genes involved in DNA repair and stress resistance. Binds to CDK1. Interacts with the 14-3-3 proteins, YWHAG and YWHAZ; the interactions require insulin-stimulated phosphorylation on Thr-24, promote nuclear exit and loss of transcriptional activity. Interacts with SKP2; the interaction ubiquitinates FOXO1 leading to its proteasomal degradation. The interaction requires the presence of KRIT1. Interacts (via the C-terminal half) with ATF4 (via its DNA binding domain); the interaction occurs in osteoblasts, regulates glucose homeostasis via suppression of beta-cell proliferation and subsequent decrease in insulin production. Interacts with PRMT1; the interaction methylates FOXO1, prevents PKB/AKT1 phosphorylation and retains FOXO1 in the nucleus. Interacts with EP300 and CREBBP; the interactions acetylate FOXO1. Interacts with SIRT2; the interaction is disrupted in response to oxidative stress or serum deprivation, leading to increased level of acetylated FOXO1, which promotes stress-induced autophagy by stimulating E1-like activating enzyme ATG7. Interacts (acetylated form) with ATG7; the interaction is increased in response to oxidative stress or serum deprivation and promotes the autophagic process leading to cell death. Interacts (acetylated form) with PPARG. Interacts with XBP1; this interaction is direct and leads to FOXO1 ubiquitination and degradation via the proteasome pathway. Interacts (via the Fork-head domain) with CEBPA; the interaction increases when FOXO1 is deacetylated. Interacts with WDFY2. Forms a complex with WDFY2 and AKT1. Interacts with CRY1. Interacts with PPIA/CYPA; the interaction promotes FOXO1 dephosphorylation, nuclear accumulation and transcriptional activity. Interacts with TOX4; FOXO1 is required for full induction of TOX4-dependent activity and the interaction is inhibited by insulin. Interacts (when phosphorylated on Ser-250) with STUB1/CHIP. Post-translationally, phosphorylation by NLK promotes nuclear export and inhibits the transcriptional activity. In response to growth factors, phosphorylation on Thr-24, Ser-250 and Ser-313 by PKB/AKT1 promotes nuclear export and inactivation of transactivational activity. Phosphorylation on Thr-24 is required for binding 14-3-3 proteins. Phosphorylation of Ser-250 decreases DNA-binding activity and promotes the phosphorylation of Thr-24 and Ser-313, permitting phosphorylation of Ser-316 and Ser-319, probably by CDK1, leading to nuclear exclusion and loss of function. Stress signals, such as response to oxygen or nitric oxide, attenuate the PKB/AKT1-mediated phosphorylation leading to nuclear retention. Phosphorylation of Ser-323 is independent of IGF1 and leads to reduced function. Dephosphorylated on Thr-24 and Ser-250 by PP2A in beta-cells under oxidative stress leading to nuclear retention. Phosphorylation of Ser-243 by CDK1 disrupts binding of 14-3-3 proteins leading to nuclear accumulation and has no effect on DNA binding nor transcriptional activity. Phosphorylation by STK4/MST1 on Ser-206, upon oxidative stress, inhibits binding to 14-3-3 proteins and nuclear export. PPIA/CYPA promotes its dephosphorylation on Ser-250. In terms of processing, ubiquitinated by SKP2. Ubiquitination leads to proteasomal degradation. Ubiquitinated by STUB1/CHIP; when Ser-250 is phosphorylated. Methylation inhibits AKT1-mediated phosphorylation at Ser-250 and is increased by oxidative stress. Post-translationally, acetylated. Acetylation at Lys-256 and Lys-268 are necessary for autophagic cell death induction. Deacetylated by SIRT2 in response to oxidative stress or serum deprivation, thereby negatively regulating FOXO1-mediated autophagic cell death. Once in the nucleus, acetylated by CREBBP/EP300. Acetylation diminishes the interaction with target DNA and attenuates the transcriptional activity. It increases the phosphorylation at Ser-250. Deacetylation by SIRT1 results in reactivation of the transcriptional activity. Oxidative stress by hydrogen peroxide treatment appears to promote deacetylation and uncoupling of insulin-induced phosphorylation. By contrast, resveratrol acts independently of acetylation. Acetylated at Lys-417, promoting its localization to the nucleus and transcription factor activity. Deacetylation at Lys-417 by SIRT6, promotes its translocation into the cytoplasm, preventing its transcription factor activity. Deacetylation and subsequent inhibition by SIRT6 has different effects depending on cell types: it inhibits gluconeogenesis in hepatocytes, promotes glucose sensing in pancreatic beta-cells and regulates lipid catabolism in brown adipocytes. As to expression, expressed in the internal elastic lamina of the carotid artery (at protein level).

The protein resides in the cytoplasm. Its subcellular location is the nucleus. Transcription factor that is the main target of insulin signaling and regulates metabolic homeostasis in response to oxidative stress. Binds to the insulin response element (IRE) with consensus sequence 5'-TT[G/A]TTTTG-3' and the related Daf-16 family binding element (DBE) with consensus sequence 5'-TT[G/A]TTTAC-3'. Activity suppressed by insulin. Main regulator of redox balance and osteoblast numbers and controls bone mass. Orchestrates the endocrine function of the skeleton in regulating glucose metabolism. Also acts as a key regulator of chondrogenic commitment of skeletal progenitor cells in response to lipid availability: when lipids levels are low, translocates to the nucleus and promotes expression of SOX9, which induces chondrogenic commitment and suppresses fatty acid oxidation. Acts synergistically with ATF4 to suppress osteocalcin/BGLAP activity, increasing glucose levels and triggering glucose intolerance and insulin insensitivity. Also suppresses the transcriptional activity of RUNX2, an upstream activator of osteocalcin/BGLAP. Acts as an inhibitor of glucose sensing in pancreatic beta cells by acting as a transcription repressor and suppressing expression of PDX1. In hepatocytes, promotes gluconeogenesis by acting together with PPARGC1A and CEBPA to activate the expression of genes such as IGFBP1, G6PC1 and PCK1. Also promotes gluconeogenesis by directly promoting expression of PPARGC1A and G6PC1. Important regulator of cell death acting downstream of CDK1, PKB/AKT1 and STK4/MST1. Promotes neural cell death. Mediates insulin action on adipose tissue. Regulates the expression of adipogenic genes such as PPARG during preadipocyte differentiation and, adipocyte size and adipose tissue-specific gene expression in response to excessive calorie intake. Regulates the transcriptional activity of GADD45A and repair of nitric oxide-damaged DNA in beta-cells. Required for the autophagic cell death induction in response to starvation or oxidative stress in a transcription-independent manner. Mediates the function of MLIP in cardiomyocytes hypertrophy and cardiac remodeling. Positive regulator of apoptosis in cardiac smooth muscle cells as a result of its transcriptional activation of pro-apoptotic genes. Regulates endothelial cell (EC) viability and apoptosis in a PPIA/CYPA-dependent manner via transcription of CCL2 and BCL2L11 which are involved in EC chemotaxis and apoptosis. In Rattus norvegicus (Rat), this protein is Forkhead box protein O1 (Foxo1).